A 547-amino-acid polypeptide reads, in one-letter code: MAELTISSDEIRSAIDNYTASYSPEASREEVGTVTDTSDGIAHVSGLPSAMSNELLEFPGGIVGVALNLDATEIGAVILGDYQNIQEGQEVKRTGDVLSVPVGDAFLGRVIDPLGAPIDGLGEIESTENRALELQAASVLERQPVEEPLQTGIKAIDAMTPIGRGQRQLIIGDRKTGKTAVCIDAILNQKANWDSGDVNKQVRCIYVAIGQKGSTIAGVKAALEEKGAMEYTTIVAAPASDSAGFKWLAPYTGSAIGQHWMYQGKHVLVVFDDLTKQAEAYRAISLLLRRPPGREAYPGDVFYLHSRLLERSAKLSDALGGGSLTALPIIETKANDVSAYIPTNVISITDGQVFLESDLFNKGVRPAINVGISVSRVGGAAQTKGMKKVSGSLRLELAQFRELEAFSAFASDLDAASKAQLERGARLVELLKQDQYSPIPVEDQIVSIYLAGEGIFDSVPIGDVRRFEKELLEDLKHSAAGVYSSINGGKALDADNAAALIAATNKFKEGFIASDGSRVVNEAEADALGADEVENEQINVKRKTVSK.

Position 172-179 (172-179 (GDRKTGKT)) interacts with ATP.

It belongs to the ATPase alpha/beta chains family. F-type ATPases have 2 components, CF(1) - the catalytic core - and CF(0) - the membrane proton channel. CF(1) has five subunits: alpha(3), beta(3), gamma(1), delta(1), epsilon(1). CF(0) has three main subunits: a(1), b(2) and c(9-12). The alpha and beta chains form an alternating ring which encloses part of the gamma chain. CF(1) is attached to CF(0) by a central stalk formed by the gamma and epsilon chains, while a peripheral stalk is formed by the delta and b chains.

It localises to the cell membrane. The catalysed reaction is ATP + H2O + 4 H(+)(in) = ADP + phosphate + 5 H(+)(out). Its function is as follows. Produces ATP from ADP in the presence of a proton gradient across the membrane. The alpha chain is a regulatory subunit. The polypeptide is ATP synthase subunit alpha (Rhodococcus erythropolis (strain PR4 / NBRC 100887)).